A 1335-amino-acid chain; its full sequence is Regulatory-associated protein of mTOR (1335 aa).

A phosphoserine mark is found at serine 44 and serine 122. Serine 696 is subject to Phosphoserine; by MAPK8. O-linked (GlcNAc) threonine glycosylation is present at threonine 700. At threonine 706 the chain carries Phosphothreonine; by MAPK8. 2 positions are modified to phosphoserine; by RPS6KA1: serine 719 and serine 721. Serine 722 carries the post-translational modification Phosphoserine; by AMPK and RPS6KA1. Position 738 is a phosphoserine (serine 738). A disordered region spans residues 749 to 771 (GSSVAFSPGNLSTSSSASSTLGS). The segment covering 755–771 (SPGNLSTSSSASSTLGS) has biased composition (low complexity). The residue at position 791 (serine 791) is a Phosphoserine. At serine 792 the chain carries Phosphoserine; by AMPK. A phosphoserine mark is found at serine 836 and serine 855. Positions 853 to 866 (TSSLTQSAPASPTN) are enriched in polar residues. The disordered stretch occupies residues 853-942 (TSSLTQSAPA…GPDQTTDDAD (90 aa)). Position 859 is a phosphoserine; by MTOR (serine 859). Serine 863 is subject to Phosphoserine; by MAPK8, MTOR and NLK. Threonine 865 is subject to Phosphothreonine. Serine 877 is modified (phosphoserine). Residues 877–887 (SPPASSTSSCS) show a composition bias toward low complexity. Polar residues predominate over residues 888-898 (LTNDVAKQTVS). Glycyl lysine isopeptide (Lys-Gly) (interchain with G-Cter in ubiquitin) cross-links involve residues lysine 932 and lysine 948. Serine 982 carries the phosphoserine modification. WD repeat units follow at residues 1020-1061 (NRNP…DYFH), 1065-1106 (PRYT…EKNP), 1121-1160 (TTRG…KVQD), 1164-1203 (GADS…SECR), 1209-1249 (EHTA…SVNV), 1251-1291 (QIVK…NNIK), and 1299-1335 (QRVG…KRVR). Residue lysine 1097 is modified to N6-acetyllysine.

Belongs to the WD repeat RAPTOR family. In terms of assembly, part of the mechanistic target of rapamycin complex 1 (mTORC1) which contains MTOR, MLST8 and RPTOR. mTORC1 associates with AKT1S1/PRAS40, which inhibits its activity. mTORC1 associates with DEPTOR, which regulates its activity. mTORC1 binds to and is inhibited by FKBP12-rapamycin. Forms a complex with MTOR under both leucine-rich and -poor conditions. Interacts with (via TOS motifs) EIF4EBP1 and RPS6KB1; interaction is independent of its association with MTOR. Binds preferentially to poorly or non-phosphorylated forms of EIF4EBP1, and this binding is critical to the ability of MTOR to catalyze phosphorylation. Interacts with ULK1 in a nutrient-dependent manner; the interaction is reduced during starvation. Interacts with GTP-bound form of RagA/RRAGA or RagB/RRAGB and GDP-bound form of RagC/RRAGC or RagD/RRAGD, promoting recruitment of mTORC1 to the lysosomes. Interacts (when phosphorylated by AMPK) with 14-3-3 protein, leading to inhibition of its activity. Interacts with SPAG5; SPAG5 competes with MTOR for RPTOR-binding, resulting in decreased mTORC1 formation. Interacts with WAC; WAC positively regulates MTOR activity by promoting the assembly of the TTT complex composed of TELO2, TTI1 and TTI2 and the RUVBL complex composed of RUVBL1 and RUVBL2 into the TTT-RUVBL complex which leads to the dimerization of the mTORC1 complex and its subsequent activation. Interacts with G3BP1. The complex formed with G3BP1 and SPAG5 is increased by oxidative stress. Interacts with HTR6. Interacts with PIH1D1. Interacts with LARP1. Interacts with BRAT1. Interacts with SIK3. Interacts with SLC38A7; this interaction mediates the recruitment of mTORC1 to the lysosome and its subsequent activation. Post-translationally, insulin-stimulated phosphorylation at Ser-863 by MTOR and MAPK8 regulates mTORC1 activity. Phosphorylated at Ser-863 by NLK in response to stress, disrupting the interaction with small GTPases Rag (RagA/RRAGA, RagB/RRAGB, RagC/RRAGC and/or RagD/RRAGD), thereby preventing lysosome recruitment and activation of the mTORC1 complex. Osmotic stress also induces phosphorylation at Ser-696, Thr-706 and Ser-863 by MAPK8. Ser-863 phosphorylation is required for phosphorylation at Ser-855 and Ser-859. In response to nutrient limitation, phosphorylated at Ser-722 and Ser-792 by AMPK; phosphorylation promotes interaction with 14-3-3 proteins, leading to negative regulation of the mTORC1 complex. Phosphorylation at Ser-722 and Ser-792 by AMPK in response to glucose starvation inhibits O-GlcNAcylation by OGT and subsequent activation of mTORC1. In response to growth factors, phosphorylated at Ser-719, Ser-721 and Ser-722 by RPS6KA1, which stimulates mTORC1 activity. Phosphorylation at Ser-791 by PKA downstream of cAMP inhibits the mTORC1 complex. Phosphorylated at Ser-877 by TBK1, leading to negative regulation of the mTORC1 complex. In terms of processing, O-GlcNAcylated by OGT upon glucose sufficiency, promoting interaction with small GTPases Rag (RagA/RRAGA, RagB/RRAGB, RagC/RRAGC and/or RagD/RRAGD) and subsequent recruitment of mTORC1 to lysosomal membranes, leading to activation of the mTORC1 complex. Phosphorylation at Ser-722 and Ser-792 by AMPK in response to glucose starvation inhibits O-GlcNAcylation. Acetylation at Lys-1097 by EP300/p300 in response to leucine metabolite acetyl-coA promotes its activity, leading to activation of the mTORC1 complex. Acetylation is decreased in response to fasting. Phosphorylated at Ser-877 by TBK1, leading to negative regulation of the mTORC1 complex. Post-translationally, ubiquitinated, leading to its degradation by the proteasome. Deubiquitinated by OTUB1 via a non-catalytic mechanism. Ubiquitinated by an E3 ubiquitin ligase complex containing VHL.

Its subcellular location is the cytoplasm. The protein resides in the lysosome. It is found in the cytoplasmic granule. In terms of biological role, component of the mechanistic target of rapamycin complex 1 (mTORC1), an evolutionarily conserved central nutrient sensor that stimulates anabolic reactions and macromolecule biosynthesis to promote cellular biomass generation and growth. In response to nutrients, growth factors or amino acids, mTORC1 is recruited to the lysosome membrane and promotes protein, lipid and nucleotide synthesis by phosphorylating several substrates, such as ribosomal protein S6 kinase (RPS6KB1 and RPS6KB2) and EIF4EBP1 (4E-BP1). In the same time, it inhibits catabolic pathways by phosphorylating the autophagy initiation components ULK1 and ATG13, as well as transcription factor TFEB, a master regulators of lysosomal biogenesis and autophagy. The mTORC1 complex is inhibited in response to starvation and amino acid depletion. Within the mTORC1 complex, RPTOR acts both as a molecular adapter, which (1) mediates recruitment of mTORC1 to lysosomal membranes via interaction with small GTPases Rag (RagA/RRAGA, RagB/RRAGB, RagC/RRAGC and/or RagD/RRAGD), and a (2) substrate-specific adapter, which promotes substrate specificity by binding to TOS motif-containing proteins and direct them towards the active site of the MTOR kinase domain for phosphorylation. mTORC1 complex regulates many cellular processes, such as odontoblast and osteoclast differentiation or neuronal transmission. mTORC1 complex in excitatory neuronal transmission is required for the prosocial behavior induced by the psychoactive substance lysergic acid diethylamide (LSD). The protein is Regulatory-associated protein of mTOR of Mus musculus (Mouse).